Consider the following 354-residue polypeptide: Carbonic anhydrase 12 (354 aa).

An N-terminal signal peptide occupies residues 1–24; the sequence is MPRRSLHAAAVLLLVILKEQPSSP. Residues 25–301 lie on the Extracellular side of the membrane; that stretch reads APVNGSKWTY…VQVCTAAGLS (277 aa). 2 N-linked (GlcNAc...) asparagine glycosylation sites follow: asparagine 28 and asparagine 80. The Alpha-carbonic anhydrase domain maps to 30–289; sequence SKWTYFGPDG…FDERLVYTSF (260 aa). An intrachain disulfide couples cysteine 50 to cysteine 230. The active-site Proton donor/acceptor is the histidine 94. Zn(2+)-binding residues include histidine 119, histidine 121, and histidine 145. Asparagine 162 carries N-linked (GlcNAc...) asparagine glycosylation. Residue 226–227 participates in substrate binding; that stretch reads TT. The helical transmembrane segment at 302 to 322 threads the bilayer; it reads LGIILSLALAGILGICIVVVV. Residues 323 to 354 are Cytoplasmic-facing; sequence SIWLFRRKSIKKGDNKGVIYKPATKMETEAHA.

This sequence belongs to the alpha-carbonic anhydrase family. Homodimer. Zn(2+) is required as a cofactor. Highly expressed in colon, kidney, prostate, intestine and activated lymphocytes. Expressed at much higher levels in the renal cell cancers than in surrounding normal kidney tissue. Moderately expressed in pancreas, ovary and testis. Expressed in sweat glands and bronchiolar epithelium.

It is found in the membrane. The protein localises to the cell membrane. It catalyses the reaction hydrogencarbonate + H(+) = CO2 + H2O. Inhibited by coumarins, saccharin, sulfonamide derivatives such as acetazolamide (AZA), benzenesulfonamide and derivatives (4-carboxyethylbenzene-sulfonamide, 4-carboxyethylbenzene-sulfonamide ethyl ester, 4-(acetyl-2-aminoethyl)benzene-sulfonamide, 4-aminoethylbenzene-sulfonamide) and Foscarnet (phosphonoformate trisodium salt). Reversible hydration of carbon dioxide. This chain is Carbonic anhydrase 12, found in Homo sapiens (Human).